The chain runs to 426 residues: 3-phosphoshikimate 1-carboxyvinyltransferase (426 aa).

Positions 22, 23, and 27 each coordinate 3-phosphoshikimate. Position 22 (lysine 22) interacts with phosphoenolpyruvate. Phosphoenolpyruvate contacts are provided by glycine 96 and arginine 124. 3-phosphoshikimate is bound by residues serine 170, serine 171, glutamine 172, serine 198, aspartate 314, asparagine 337, and lysine 341. A phosphoenolpyruvate-binding site is contributed by glutamine 172. The Proton acceptor role is filled by aspartate 314. Phosphoenolpyruvate is bound by residues arginine 345, arginine 387, and lysine 412.

The protein belongs to the EPSP synthase family. Monomer.

It localises to the cytoplasm. It catalyses the reaction 3-phosphoshikimate + phosphoenolpyruvate = 5-O-(1-carboxyvinyl)-3-phosphoshikimate + phosphate. The protein operates within metabolic intermediate biosynthesis; chorismate biosynthesis; chorismate from D-erythrose 4-phosphate and phosphoenolpyruvate: step 6/7. Catalyzes the transfer of the enolpyruvyl moiety of phosphoenolpyruvate (PEP) to the 5-hydroxyl of shikimate-3-phosphate (S3P) to produce enolpyruvyl shikimate-3-phosphate and inorganic phosphate. This chain is 3-phosphoshikimate 1-carboxyvinyltransferase, found in Shewanella sediminis (strain HAW-EB3).